The chain runs to 207 residues: Large ribosomal subunit protein uL4 (207 aa).

The segment at 49–78 is disordered; that stretch reads HAVKNRSAVRGGGKKPWRQKGTGRARQGSI. Positions 60 to 71 are enriched in basic residues; the sequence is GGKKPWRQKGTG.

The protein belongs to the universal ribosomal protein uL4 family. Part of the 50S ribosomal subunit.

In terms of biological role, one of the primary rRNA binding proteins, this protein initially binds near the 5'-end of the 23S rRNA. It is important during the early stages of 50S assembly. It makes multiple contacts with different domains of the 23S rRNA in the assembled 50S subunit and ribosome. Functionally, forms part of the polypeptide exit tunnel. This Ligilactobacillus salivarius (strain UCC118) (Lactobacillus salivarius) protein is Large ribosomal subunit protein uL4.